Reading from the N-terminus, the 861-residue chain is Leucine--tRNA ligase (861 aa).

Positions 43–53 (PYPSGKLHMGH) match the 'HIGH' region motif. The 'KMSKS' region motif lies at 588-592 (KMSKS). Residue lysine 591 coordinates ATP.

It belongs to the class-I aminoacyl-tRNA synthetase family.

It is found in the cytoplasm. It carries out the reaction tRNA(Leu) + L-leucine + ATP = L-leucyl-tRNA(Leu) + AMP + diphosphate. This is Leucine--tRNA ligase from Symbiobacterium thermophilum (strain DSM 24528 / JCM 14929 / IAM 14863 / T).